A 428-amino-acid chain; its full sequence is MGPQRLLLVAAGLSLCGPLLSSRVPVRQPESEMTDATVNPRSFFLRNPGENTFELIPLGDEEEKNESTLPEGRAIYLNKSHSPPAPLAPFISEDASGYLTSPWLRLFIPSVYTFVFVVSLPLNILAIAVFVLKMKVKKPAVVYMLHLAMADVLFVSVLPLKISYYFSGSDWQFGSGMCRFATAAFYCNMYASIMLMTVISIDRFLAVVYPIQSLSWRTLGRANFTCLVIWVMAIMGVVPLLLKEQTTRVPGLNITTCHDVLNETLLQGFYSYYFSAFSAVFFLVPLIISTICYMSIIRCLSSSSVANRSKKSRALFLSAAVFCVFIVCFGPTNVLLIMHYLLLSDSPATEKAYFAYLLCVCVSSVSCCIDPLIYYYASSECQRHLYGILCCKESSDPNSYNSTGQLMPSKMDTCSSHLNNSIYKKLLA.

An N-terminal signal peptide occupies residues 1–21; that stretch reads MGPQRLLLVAAGLSLCGPLLS. Residues 22-41 constitute a propeptide, removed for receptor activation; the sequence is SRVPVRQPESEMTDATVNPR. At 42–105 the chain is on the extracellular side; the sequence is SFFLRNPGEN…SGYLTSPWLR (64 aa). N-linked (GlcNAc...) asparagine glycans are attached at residues N65 and N78. The chain crosses the membrane as a helical span at residues 106–131; sequence LFIPSVYTFVFVVSLPLNILAIAVFV. Topologically, residues 132–140 are cytoplasmic; that stretch reads LKMKVKKPA. Residues 141–160 traverse the membrane as a helical segment; that stretch reads VVYMLHLAMADVLFVSVLPL. The Extracellular segment spans residues 161–179; it reads KISYYFSGSDWQFGSGMCR. C178 and C257 are disulfide-bonded. Residues 180-201 traverse the membrane as a helical segment; it reads FATAAFYCNMYASIMLMTVISI. Residues 202-221 are Cytoplasmic-facing; it reads DRFLAVVYPIQSLSWRTLGR. The chain crosses the membrane as a helical span at residues 222-242; the sequence is ANFTCLVIWVMAIMGVVPLLL. The Extracellular portion of the chain corresponds to 243–271; sequence KEQTTRVPGLNITTCHDVLNETLLQGFYS. 2 N-linked (GlcNAc...) asparagine glycosylation sites follow: N253 and N262. The chain crosses the membrane as a helical span at residues 272–291; it reads YYFSAFSAVFFLVPLIISTI. At 292–314 the chain is on the cytoplasmic side; the sequence is CYMSIIRCLSSSSVANRSKKSRA. Residues 315–337 form a helical membrane-spanning segment; that stretch reads LFLSAAVFCVFIVCFGPTNVLLI. Over 338–352 the chain is Extracellular; that stretch reads MHYLLLSDSPATEKA. The helical transmembrane segment at 353–377 threads the bilayer; it reads YFAYLLCVCVSSVSCCIDPLIYYYA. The Cytoplasmic segment spans residues 378–428; it reads SSECQRHLYGILCCKESSDPNSYNSTGQLMPSKMDTCSSHLNNSIYKKLLA. S421 carries the phosphoserine modification.

Belongs to the G-protein coupled receptor 1 family. In terms of processing, proteolytic cleavage by thrombin generates a new N-terminus that functions as a tethered ligand. Also proteolytically cleaved by cathepsin CTSG. Post-translationally, phosphorylated in the C-terminal tail; probably mediating desensitization prior to the uncoupling and internalization of the receptor.

The protein localises to the cell membrane. Functionally, high affinity receptor that binds the activated thrombin, leading to calcium release from intracellular stores. The thrombin-activated receptor signaling pathway is mediated through PTX-insensitive G proteins, activation of phospholipase C resulting in the production of 1D-myo-inositol 1,4,5-trisphosphate (InsP3) which binds to InsP3 receptors causing calcium release from the stores. In astrocytes, the calcium released into the cytosol allows the Ca(2+)-dependent release of L-glutamate into the synaptic cleft through BEST1, that targets the neuronal postsynaptic GRIN2A/NMDAR receptor resulting in the synaptic plasticity regulation. May play a role in platelets activation and in vascular development. Mediates up-regulation of pro-inflammatory cytokines, such as MCP-1/CCL2 and IL6, triggered by coagulation factor Xa (F10) in cardiac fibroblasts and umbilical vein endothelial cells. This chain is Proteinase-activated receptor 1, found in Cricetulus longicaudatus (Long-tailed dwarf hamster).